Consider the following 498-residue polypeptide: Capsanthin/capsorubin synthase, chromoplastic (498 aa).

The N-terminal 52 residues, 1 to 52, are a transit peptide targeting the chromoplast; that stretch reads METLLKPFPSPLLSIPTPNMYSFKHNSTFPNPTKQKDSRKFHYRNKSSTHFC. An NAD(+)-binding site is contributed by 84 to 112; sequence VIIIGTGPAGLRLAEQVSKYGIKVCCVDP. The short motif at 293–297 is the FLEET motif element; that stretch reads FLEET.

The protein belongs to the lycopene cyclase family. In terms of assembly, monomer. FAD is required as a cofactor. The cofactor is NADPH.

The protein resides in the plastid. The protein localises to the chromoplast. It carries out the reaction all-trans-violaxanthin = all-trans-capsorubin. The enzyme catalyses all-trans-antheraxanthin = all-trans-capsanthin. It catalyses the reaction all-trans-violaxanthin = (5R,6S)-5,6-epoxi-capsanthin. The catalysed reaction is (5R,6S)-5,6-epoxi-capsanthin = all-trans-capsorubin. Its pathway is carotenoid biosynthesis; capsanthin biosynthesis; capsanthin from antheraxanthin: step 1/1. It functions in the pathway carotenoid biosynthesis; capsorubin biosynthesis; capsorubin from violaxanthin: step 1/1. Catalyzes the conversion of the ubiquitous 5,6-epoxycarotenoids, antheraxanthin and violaxanthin, into capsanthin and capsorubin, respectively. This chain is Capsanthin/capsorubin synthase, chromoplastic, found in Capsicum annuum (Capsicum pepper).